Here is a 503-residue protein sequence, read N- to C-terminus: MMSISLIWGIAVVVSCCIWFIIGIRRRKVGEPPLDNGLIPYLGCALKFGSNPLEFLRAKQRKHGHVFTCKLMGKYVHFITNSLSYHKVLCHGKYFDWKKFHYTTSAKAFGHRSIDPSDGNTTENINKTFNKTLQGDALCSLSEAMMQNLQSVMRPPGLPKSKSAVWVTEGMYAFCYRVMFEAGYLTLFGKDISKTDSQRAFIQNNLDSFKQFDQVFPALVAGVPIHLFKTAHKARERLAESLKHKNLYMRDQVSELIRLRMFLNDTLSTFDDMEKAKTHLVILWASQANTIPATFWSLFQMIRSPEAMKAASEEVNGALQSAGQELSSGGNAIYLDQEQLNNLPVLDSIIKEALRLSSASLNIRTAKEDFTLHLEDGSYNIRKDDIIALYPQLMHLDPEIYPDPLTFKYDRYLDESGKAKTTFYRNGNKLKYFYMPFGSGATICPGRLFAVQEIKQFLILMLSYFELELVESHTKCPPLDQSRAGLGILPPLNDIEFKYKLKH.

A helical membrane pass occupies residues 4–24; the sequence is ISLIWGIAVVVSCCIWFIIGI. Heme is bound at residue cysteine 444.

It belongs to the cytochrome P450 family. The cofactor is heme.

The protein resides in the endoplasmic reticulum membrane. Its subcellular location is the microsome membrane. It catalyses the reaction cholesterol + reduced [NADPH--hemoprotein reductase] + O2 = 7alpha-hydroxycholesterol + oxidized [NADPH--hemoprotein reductase] + H2O + H(+). The enzyme catalyses 4beta-hydroxycholesterol + reduced [NADPH--hemoprotein reductase] + O2 = 4beta,7alpha-dihydroxycholesterol + oxidized [NADPH--hemoprotein reductase] + H2O + H(+). It carries out the reaction lathosterol + reduced [NADPH--hemoprotein reductase] + O2 = 7alpha,8alpha-epoxy-5alpha-cholestan-3beta-ol + oxidized [NADPH--hemoprotein reductase] + H2O + H(+). The catalysed reaction is lathosterol + reduced [NADPH--hemoprotein reductase] + O2 = 5alpha-cholestan-7-oxo-3beta-ol + oxidized [NADPH--hemoprotein reductase] + H2O + H(+). It catalyses the reaction 7-dehydrocholesterol + reduced [NADPH--hemoprotein reductase] + O2 = 7-oxocholesterol + oxidized [NADPH--hemoprotein reductase] + H2O + H(+). The enzyme catalyses (24S)-hydroxycholesterol + reduced [NADPH--hemoprotein reductase] + O2 = (24S)-7alpha-dihydroxycholesterol + oxidized [NADPH--hemoprotein reductase] + H2O + H(+). It carries out the reaction (24R)-hydroxycholesterol + reduced [NADPH--hemoprotein reductase] + O2 = (24R)-7alpha-dihydroxycholesterol + oxidized [NADPH--hemoprotein reductase] + H2O + H(+). It participates in lipid metabolism; bile acid biosynthesis. The protein operates within steroid metabolism; cholesterol degradation. A cytochrome P450 monooxygenase involved in the metabolism of endogenous cholesterol and its oxygenated derivatives (oxysterols). Mechanistically, uses molecular oxygen inserting one oxygen atom into a substrate, and reducing the second into a water molecule, with two electrons provided by NADPH via cytochrome P450 reductase (CPR; NADPH-ferrihemoprotein reductase). Functions as a critical regulatory enzyme of bile acid biosynthesis and cholesterol homeostasis. Catalyzes the hydroxylation of carbon hydrogen bond at 7-alpha position of cholesterol, a rate-limiting step in cholesterol catabolism and bile acid biosynthesis. 7-alpha hydroxylates several oxysterols, including 4beta-hydroxycholesterol and 24-hydroxycholesterol. Catalyzes the oxidation of the 7,8 double bond of 7-dehydrocholesterol and lathosterol with direct and predominant formation of the 7-keto derivatives. The protein is Cytochrome P450 7A1 of Mus musculus (Mouse).